A 196-amino-acid polypeptide reads, in one-letter code: CASP-like protein 2A2 (196 aa).

At 1 to 26 (MAQGKESVSVVEMEGSGNGPAVEMRH) the chain is on the cytoplasmic side. Residues 27–47 (FETLFRLLPVGLCISALVLML) traverse the membrane as a helical segment. The Extracellular portion of the chain corresponds to 48–68 (KSEQSDQYMQLDYSNVDAFRC). Residues 69 to 89 (LAYANGICAGYSLISAFDSMV) form a helical membrane-spanning segment. Residues 90-98 (PVSHHISRS) are Cytoplasmic-facing. Residues 99–119 (WILFLLDQGITYLMLAGGAVA) traverse the membrane as a helical segment. Residues 120 to 148 (TQVLYVAYKGDEKATWEQICGSYGRFCNR) lie on the Extracellular side of the membrane. A helical membrane pass occupies residues 149–169 (AGASVIISFFALVCFLLLSLL). At 170 to 196 (SAYRLFSKYDPPIHGGAKLEDQTTAQI) the chain is on the cytoplasmic side.

It belongs to the Casparian strip membrane proteins (CASP) family. Homodimer and heterodimers.

Its subcellular location is the cell membrane. The sequence is that of CASP-like protein 2A2 from Picea sitchensis (Sitka spruce).